A 156-amino-acid polypeptide reads, in one-letter code: Transcription elongation factor GreA (156 aa).

A coiled-coil region spans residues 1 to 32 (MKKVRLTREGYEKLKKELEDLKRKFMYEISER).

This sequence belongs to the GreA/GreB family.

In terms of biological role, necessary for efficient RNA polymerase transcription elongation past template-encoded arresting sites. The arresting sites in DNA have the property of trapping a certain fraction of elongating RNA polymerases that pass through, resulting in locked ternary complexes. Cleavage of the nascent transcript by cleavage factors such as GreA or GreB allows the resumption of elongation from the new 3'terminus. GreA releases sequences of 2 to 3 nucleotides. This Thermotoga petrophila (strain ATCC BAA-488 / DSM 13995 / JCM 10881 / RKU-1) protein is Transcription elongation factor GreA.